A 144-amino-acid chain; its full sequence is Eukaryotic translation initiation factor 1A (144 aa).

The span at 1–15 (MPKNKGKGGKNRKRG) shows a compositional bias: basic residues. 2 disordered regions span residues 1–25 (MPKN…DKRE) and 120–144 (DVDG…IDKI). Basic and acidic residues predominate over residues 16 to 25 (KNEADDDKRE). The 75-residue stretch at 22–96 (DKRELVFKED…DKADVILKYM (75 aa)) folds into the S1-like domain.

This sequence belongs to the eIF-1A family.

Functionally, seems to be required for maximal rate of protein biosynthesis. Enhances ribosome dissociation into subunits and stabilizes the binding of the initiator Met-tRNA(I) to 40 S ribosomal subunits. The sequence is that of Eukaryotic translation initiation factor 1A from Triticum aestivum (Wheat).